Reading from the N-terminus, the 619-residue chain is UvrABC system protein C (619 aa).

The GIY-YIG domain maps to 20 to 98 (TAPGVYRMYA…IKSLSPRYNV (79 aa)). Residues 207 to 242 (DQLGEEIMHSMQQASEALEFERAARLRDLLSSLRSM) enclose the UVR domain.

The protein belongs to the UvrC family. Interacts with UvrB in an incision complex.

It is found in the cytoplasm. The UvrABC repair system catalyzes the recognition and processing of DNA lesions. UvrC both incises the 5' and 3' sides of the lesion. The N-terminal half is responsible for the 3' incision and the C-terminal half is responsible for the 5' incision. The polypeptide is UvrABC system protein C (Xanthomonas axonopodis pv. citri (strain 306)).